The chain runs to 159 residues: Nucleoside diphosphate kinase (159 aa).

ATP-binding residues include lysine 13, phenylalanine 61, arginine 89, threonine 95, arginine 106, and asparagine 116. Histidine 119 serves as the catalytic Pros-phosphohistidine intermediate.

This sequence belongs to the NDK family. It depends on Mg(2+) as a cofactor.

It localises to the cytoplasm. The catalysed reaction is a 2'-deoxyribonucleoside 5'-diphosphate + ATP = a 2'-deoxyribonucleoside 5'-triphosphate + ADP. It carries out the reaction a ribonucleoside 5'-diphosphate + ATP = a ribonucleoside 5'-triphosphate + ADP. In terms of biological role, major role in the synthesis of nucleoside triphosphates other than ATP. The ATP gamma phosphate is transferred to the NDP beta phosphate via a ping-pong mechanism, using a phosphorylated active-site intermediate. This is Nucleoside diphosphate kinase from Halorubrum lacusprofundi (strain ATCC 49239 / DSM 5036 / JCM 8891 / ACAM 34).